Here is a 112-residue protein sequence, read N- to C-terminus: Small ribosomal subunit protein uS17 (112 aa).

This sequence belongs to the universal ribosomal protein uS17 family. In terms of assembly, part of the 30S ribosomal subunit.

In terms of biological role, one of the primary rRNA binding proteins, it binds specifically to the 5'-end of 16S ribosomal RNA. In Haloarcula marismortui (strain ATCC 43049 / DSM 3752 / JCM 8966 / VKM B-1809) (Halobacterium marismortui), this protein is Small ribosomal subunit protein uS17.